The following is an 821-amino-acid chain: Leucine--tRNA ligase (821 aa).

A 'HIGH' region motif is present at residues 44–54 (PYPSGRIHMGH). The short motif at 589–593 (KMSKS) is the 'KMSKS' region element. Residue Lys-592 participates in ATP binding.

This sequence belongs to the class-I aminoacyl-tRNA synthetase family.

It localises to the cytoplasm. It catalyses the reaction tRNA(Leu) + L-leucine + ATP = L-leucyl-tRNA(Leu) + AMP + diphosphate. The sequence is that of Leucine--tRNA ligase from Campylobacter curvus (strain 525.92).